The sequence spans 341 residues: uncharacterized protein (341 aa).

58–82 (ITGGSSGIGAAAAKKIAEAGGTVVL) serves as a coordination point for NADP(+). Residue Ser-194 participates in substrate binding. Tyr-207 acts as the Proton acceptor in catalysis. The interval 309–329 (DSSAAKGSESQTDTSELDKRS) is disordered.

Belongs to the short-chain dehydrogenases/reductases (SDR) family.

This is an uncharacterized protein from Mycobacterium bovis (strain ATCC BAA-935 / AF2122/97).